We begin with the raw amino-acid sequence, 333 residues long: Probable tRNA pseudouridine synthase B (333 aa).

D66 (nucleophile) is an active-site residue. Residues 233–308 (LKKIIIKDSA…EVVEITRVIM (76 aa)) form the PUA domain.

Belongs to the pseudouridine synthase TruB family. Type 2 subfamily.

It carries out the reaction uridine(55) in tRNA = pseudouridine(55) in tRNA. Could be responsible for synthesis of pseudouridine from uracil-55 in the psi GC loop of transfer RNAs. In Methanococcus maripaludis (strain DSM 14266 / JCM 13030 / NBRC 101832 / S2 / LL), this protein is Probable tRNA pseudouridine synthase B.